The sequence spans 184 residues: Adenine phosphoribosyltransferase (184 aa).

Belongs to the purine/pyrimidine phosphoribosyltransferase family. In terms of assembly, homodimer.

It is found in the cytoplasm. It carries out the reaction AMP + diphosphate = 5-phospho-alpha-D-ribose 1-diphosphate + adenine. It participates in purine metabolism; AMP biosynthesis via salvage pathway; AMP from adenine: step 1/1. Functionally, catalyzes a salvage reaction resulting in the formation of AMP, that is energically less costly than de novo synthesis. This is Adenine phosphoribosyltransferase from Acidovorax sp. (strain JS42).